The primary structure comprises 148 residues: Meiosis inducing protein mei3 (148 aa).

The segment covering 1-20 has biased composition (polar residues); it reads MSSQNTSNSRHPASSASALP. A disordered region spans residues 1–96; that stretch reads MSSQNTSNSR…AQRIEHENKE (96 aa). The segment covering 21–46 has biased composition (low complexity); that stretch reads NRTNTARRSTSPRTSTGSSSTNTNTK. A compositionally biased stretch (basic residues) spans 75-86; the sequence is PMKRTKRVRRTP.

Its function is as follows. Acts as a critical meiotic inducer by binding non-covalently to protein kinase ran1/pat1 inhibiting its enzymatic activity. Inhibits ran1/pat1 by acting as a pseudosubstrate for ran1/pat1 instead of its natural substrate ste11. Inactivation of the ran1/pat1 protein kinase is both necessary and sufficient to divert a vegetative cell from mitotic division to meiotic differentiation. This is Meiosis inducing protein mei3 from Schizosaccharomyces pombe (strain 972 / ATCC 24843) (Fission yeast).